The chain runs to 433 residues: Enolase (433 aa).

Residue glutamine 166 participates in (2R)-2-phosphoglycerate binding. The Proton donor role is filled by glutamate 208. 3 residues coordinate Mg(2+): aspartate 245, glutamate 290, and aspartate 317. (2R)-2-phosphoglycerate is bound by residues lysine 342, arginine 371, serine 372, and lysine 393. Lysine 342 functions as the Proton acceptor in the catalytic mechanism.

This sequence belongs to the enolase family. It depends on Mg(2+) as a cofactor.

It is found in the cytoplasm. It localises to the secreted. The protein localises to the cell surface. The catalysed reaction is (2R)-2-phosphoglycerate = phosphoenolpyruvate + H2O. The protein operates within carbohydrate degradation; glycolysis; pyruvate from D-glyceraldehyde 3-phosphate: step 4/5. Its function is as follows. Catalyzes the reversible conversion of 2-phosphoglycerate (2-PG) into phosphoenolpyruvate (PEP). It is essential for the degradation of carbohydrates via glycolysis. The sequence is that of Enolase from Clostridium novyi (strain NT).